Here is a 509-residue protein sequence, read N- to C-terminus: Diacylglycerol kinase 5 (509 aa).

Positions 36-187 (TPASPVLVFI…IDNWHILMRM (152 aa)) constitute a DAGKc domain. The span at 439-452 (RSVFDPSTPRHQDG) shows a compositional bias: basic and acidic residues. The disordered stretch occupies residues 439 to 509 (RSVFDPSTPR…SNVHGWSHVL (71 aa)). Residues 453–467 (AEDYDDNEDDSVAEG) show a composition bias toward acidic residues. A compositionally biased stretch (basic and acidic residues) spans 468–489 (EEFRKFGAADTFKIPDEGEHSN). The span at 490–500 (KKGRASRRRNS) shows a compositional bias: basic residues.

Belongs to the eukaryotic diacylglycerol kinase family. Monomer.

It carries out the reaction a 1,2-diacyl-sn-glycerol + ATP = a 1,2-diacyl-sn-glycero-3-phosphate + ADP + H(+). Functionally, phosphorylates the second messenger diacylglycerol (DAG) to generate phosphatidic acid (PA), another important signaling molecule. PA is required for plant development and responses to abiotic stress and pathogen attack. May be involved in the accumulation of PA during cold stress. This chain is Diacylglycerol kinase 5 (DGK5), found in Arabidopsis thaliana (Mouse-ear cress).